Consider the following 135-residue polypeptide: U-myrmeciitoxin(01)-Mg7a (135 aa).

A signal peptide spans 1-21; sequence MKLSCLSLALAIILLLAIVHS. The propeptide occupies 22-72; that stretch reads PNMEVKALAGPEADAIGFADAFGEADAFGEADAFGEADAFGEADAFGEADA. A disordered region spans residues 69-95; it reads EADAKRSKSSSKTKPKKPKKPKKKIKI. Basic residues predominate over residues 75–93; the sequence is SKSSSKTKPKKPKKPKKKI. O-linked (GalNAc...) serine glycosylation occurs at Ser-120. Residues Thr-129 and Thr-130 are each glycosylated (O-linked (GalNAc...) threonine).

Belongs to the formicidae venom precursor-01 superfamily. Post-translationally, glycosylation is critical to maintaining the aqueous solubility of this protein, but does not directly contribute to its activity. In terms of tissue distribution, expressed by the venom gland.

The protein resides in the secreted. Its subcellular location is the target cell membrane. In terms of biological role, neurotoxin that triggers pain behavior and inflammation in mammals, and is paralytic and lethal to insects. Causes a time-dependent increase in cell leak current. May act by targeting membranes. The polypeptide is U-myrmeciitoxin(01)-Mg7a (Myrmecia gulosa (Red bulldog ant)).